The sequence spans 312 residues: Homoserine O-acetyltransferase (312 aa).

C142 acts as the Acyl-thioester intermediate in catalysis. The substrate site is built by K163 and S192. The Proton acceptor role is filled by H235. Residue E237 is part of the active site. R249 contacts substrate.

This sequence belongs to the MetA family.

It localises to the cytoplasm. It catalyses the reaction L-homoserine + acetyl-CoA = O-acetyl-L-homoserine + CoA. It participates in amino-acid biosynthesis; L-methionine biosynthesis via de novo pathway; O-acetyl-L-homoserine from L-homoserine: step 1/1. Functionally, transfers an acetyl group from acetyl-CoA to L-homoserine, forming acetyl-L-homoserine. In Chelativorans sp. (strain BNC1), this protein is Homoserine O-acetyltransferase.